The following is a 47-amino-acid chain: Small, acid-soluble spore protein N (47 aa).

Polar residues-rich tracts occupy residues 1 to 11 and 29 to 47; these read MGNPKSNQQPF and KQMQDQSGQHPQVIQTKGE. Residues 1-47 form a disordered region; the sequence is MGNPKSNQQPFVPQHIGTKPREAGGNKGKQMQDQSGQHPQVIQTKGE.

This sequence belongs to the SspN family.

Its subcellular location is the spore core. The sequence is that of Small, acid-soluble spore protein N from Anoxybacillus flavithermus (strain DSM 21510 / WK1).